The chain runs to 375 residues: Putative F-box protein At5g52620 (375 aa).

The 48-residue stretch at 5–52 (GKSDPIPIDIILDILSRLSTNSIAKFGLASKFCGSILRGQDFIELFLI) folds into the F-box domain.

In Arabidopsis thaliana (Mouse-ear cress), this protein is Putative F-box protein At5g52620.